Here is a 124-residue protein sequence, read N- to C-terminus: Small ribosomal subunit protein uS12 (124 aa).

Asp-89 carries the 3-methylthioaspartic acid modification.

This sequence belongs to the universal ribosomal protein uS12 family. As to quaternary structure, part of the 30S ribosomal subunit. Contacts proteins S8 and S17. May interact with IF1 in the 30S initiation complex.

Its function is as follows. With S4 and S5 plays an important role in translational accuracy. Interacts with and stabilizes bases of the 16S rRNA that are involved in tRNA selection in the A site and with the mRNA backbone. Located at the interface of the 30S and 50S subunits, it traverses the body of the 30S subunit contacting proteins on the other side and probably holding the rRNA structure together. The combined cluster of proteins S8, S12 and S17 appears to hold together the shoulder and platform of the 30S subunit. The chain is Small ribosomal subunit protein uS12 from Vibrio atlanticus (strain LGP32) (Vibrio splendidus (strain Mel32)).